The sequence spans 645 residues: Bifurcating [FeFe] hydrogenase alpha subunit (645 aa).

Residues 1-76 (MKIYVDGREV…GMKVKTNTPE (76 aa)) form the 2Fe-2S ferredoxin-type domain. Residues C34, C45, C48, and C60 each contribute to the [2Fe-2S] cluster site. The 4Fe-4S His(Cys)3-ligated-type domain maps to 76 to 115 (EIYEMRRNILELILATHNRDCTTCDRNGSCKLQKYAEDFG). H92, C96, C99, C105, C143, C146, C149, C153, C186, C189, C192, C196, C295, C350, C482, and C486 together coordinate [4Fe-4S] cluster. 2 4Fe-4S ferredoxin-type domains span residues 133–164 (SAPV…VIEF) and 178–206 (DTPL…IRND). C486 is a Fe(2+) binding site. [2Fe-2S] cluster is bound by residues C575, C580, C612, and C616.

As to quaternary structure, heterotrimer composed of HydA (alpha subunit), HydB (beta subunit) and HydC (gamma subunit). Near neutral and acidic pH conditions favor oligomerization of the heterotrimeric holoenzyme. The cofactor is [2Fe-2S] cluster. [4Fe-4S] cluster is required as a cofactor. It depends on Fe(2+) as a cofactor.

The protein localises to the cytoplasm. The catalysed reaction is 2 H2 + 2 oxidized [2Fe-2S]-[ferredoxin] + NAD(+) = 2 reduced [2Fe-2S]-[ferredoxin] + NADH + 3 H(+). Its function is as follows. Catalyzes the oxidation of the physiological electron carriers NADH and reduced ferredoxin, coupled to the production of H(2). Acts as a bifurcating [FeFe] hydrogenase, which uses the exergonic oxidation of reduced ferredoxin to drive the unfavorable oxidation of NADH to produce H(2). The alpha subunit contains the catalytic H-cluster. This Thermotoga maritima (strain ATCC 43589 / DSM 3109 / JCM 10099 / NBRC 100826 / MSB8) protein is Bifurcating [FeFe] hydrogenase alpha subunit.